Consider the following 339-residue polypeptide: GTPase Obg (339 aa).

Residues 1-159 (MKFVDEAFVR…RELKLELKLL (159 aa)) form the Obg domain. The region spanning 160 to 333 (ADVGLLGLPN…LCYDLMSFLE (174 aa)) is the OBG-type G domain. GTP contacts are provided by residues 166–173 (GLPNAGKS), 191–195 (FTTLY), 213–216 (DIPG), 283–286 (NKID), and 314–316 (SAI). Residues serine 173 and threonine 193 each contribute to the Mg(2+) site.

The protein belongs to the TRAFAC class OBG-HflX-like GTPase superfamily. OBG GTPase family. In terms of assembly, monomer. The cofactor is Mg(2+).

The protein resides in the cytoplasm. In terms of biological role, an essential GTPase which binds GTP, GDP and possibly (p)ppGpp with moderate affinity, with high nucleotide exchange rates and a fairly low GTP hydrolysis rate. Plays a role in control of the cell cycle, stress response, ribosome biogenesis and in those bacteria that undergo differentiation, in morphogenesis control. This chain is GTPase Obg, found in Coxiella burnetii (strain RSA 331 / Henzerling II).